Reading from the N-terminus, the 329-residue chain is Phenylalanine--tRNA ligase alpha subunit (329 aa).

E254 lines the Mg(2+) pocket.

Belongs to the class-II aminoacyl-tRNA synthetase family. Phe-tRNA synthetase alpha subunit type 1 subfamily. In terms of assembly, tetramer of two alpha and two beta subunits. The cofactor is Mg(2+).

It is found in the cytoplasm. It catalyses the reaction tRNA(Phe) + L-phenylalanine + ATP = L-phenylalanyl-tRNA(Phe) + AMP + diphosphate + H(+). This is Phenylalanine--tRNA ligase alpha subunit from Mannheimia succiniciproducens (strain KCTC 0769BP / MBEL55E).